The sequence spans 215 residues: Urease accessory protein UreG 2 (215 aa).

11 to 18 (GPVGSGKT) lines the GTP pocket.

The protein belongs to the SIMIBI class G3E GTPase family. UreG subfamily. In terms of assembly, homodimer. UreD, UreF and UreG form a complex that acts as a GTP-hydrolysis-dependent molecular chaperone, activating the urease apoprotein by helping to assemble the nickel containing metallocenter of UreC. The UreE protein probably delivers the nickel.

The protein resides in the cytoplasm. Functionally, facilitates the functional incorporation of the urease nickel metallocenter. This process requires GTP hydrolysis, probably effectuated by UreG. The protein is Urease accessory protein UreG 2 of Methylorubrum extorquens (strain PA1) (Methylobacterium extorquens).